The chain runs to 1009 residues: Probable beta-galactosidase B (1009 aa).

The N-terminal stretch at 1–27 (MKTIAGLSWISALSSLASLPNGLGVSA) is a signal peptide. Residue tyrosine 96 participates in substrate binding. A glycan (N-linked (GlcNAc...) asparagine) is linked at asparagine 106. Substrate is bound by residues asparagine 141, alanine 142, glutamate 143, and asparagine 201. Glutamate 202 acts as the Proton donor in catalysis. Tyrosine 271 contributes to the substrate binding site. A disulfide bridge connects residues cysteine 277 and cysteine 330. Glutamate 314 acts as the Nucleophile in catalysis. Substrate is bound at residue tyrosine 379. Residues asparagine 467, asparagine 495, asparagine 547, asparagine 593, asparagine 632, asparagine 672, asparagine 707, asparagine 775, asparagine 782, asparagine 789, asparagine 795, and asparagine 914 are each glycosylated (N-linked (GlcNAc...) asparagine).

It belongs to the glycosyl hydrolase 35 family.

It is found in the secreted. The enzyme catalyses Hydrolysis of terminal non-reducing beta-D-galactose residues in beta-D-galactosides.. Its function is as follows. Cleaves beta-linked terminal galactosyl residues from gangliosides, glycoproteins, and glycosaminoglycans. This is Probable beta-galactosidase B (lacB) from Pyrenophora tritici-repentis (strain Pt-1C-BFP) (Wheat tan spot fungus).